The primary structure comprises 231 residues: Augmin complex subunit dgt2 (231 aa).

A coiled-coil region spans residues 128–199 (QEADLSCDQK…VQTKAELLRG (72 aa)).

Component of the augmin complex composed of dgt2, dgt3, dgt4, dgt5, dgt6, msd1, msd5 and wac. The complex interacts directly or indirectly with microtubules and is required for centrosome-independent generation of spindle microtubules. dgt2 interacts directly with wac (via coiled coil). In terms of tissue distribution, in adult females, detected only in the abdomen with no expression in the head or thorax (at protein level).

It localises to the cytoplasm. The protein resides in the cytoskeleton. Its subcellular location is the spindle. It is found in the spindle pole. Functionally, as part of the augmin complex, plays a role in centrosome-independent generation of spindle microtubules. The complex is required for mitotic spindle assembly through its involvement in localizing gamma-tubulin to spindle microtubules. dgt2 binds to microtubules in vitro. The sequence is that of Augmin complex subunit dgt2 from Drosophila melanogaster (Fruit fly).